Reading from the N-terminus, the 73-residue chain is Conotoxin Asp7/Gla(3)-TxVI (73 aa).

Positions 1–19 are cleaved as a signal peptide; it reads MQKLIILLLVAAVLMSTQA. Residues 20 to 44 constitute a propeptide that is removed on maturation; sequence VLQEKRPKEKIKFLSKRKTDAEKQQ. 3 cysteine pairs are disulfide-bonded: Cys-48-Cys-62, Cys-55-Cys-66, and Cys-61-Cys-71. A 4-hydroxyproline mark is found at Pro-49 and Pro-54. Glu-60 bears the 4-carboxyglutamate mark. Trp-64 is subject to 6'-bromotryptophan.

As to expression, expressed by the venom duct.

It localises to the secreted. This is Conotoxin Asp7/Gla(3)-TxVI from Conus textile (Cloth-of-gold cone).